The primary structure comprises 406 residues: Phosphopentomutase (406 aa).

D10, D305, H310, D346, H347, and H358 together coordinate Mn(2+).

This sequence belongs to the phosphopentomutase family. Mn(2+) is required as a cofactor.

It is found in the cytoplasm. It catalyses the reaction 2-deoxy-alpha-D-ribose 1-phosphate = 2-deoxy-D-ribose 5-phosphate. The catalysed reaction is alpha-D-ribose 1-phosphate = D-ribose 5-phosphate. It functions in the pathway carbohydrate degradation; 2-deoxy-D-ribose 1-phosphate degradation; D-glyceraldehyde 3-phosphate and acetaldehyde from 2-deoxy-alpha-D-ribose 1-phosphate: step 1/2. Functionally, isomerase that catalyzes the conversion of deoxy-ribose 1-phosphate (dRib-1-P) and ribose 1-phosphate (Rib-1-P) to deoxy-ribose 5-phosphate (dRib-5-P) and ribose 5-phosphate (Rib-5-P), respectively. The chain is Phosphopentomutase from Vibrio cholerae serotype O1 (strain ATCC 39315 / El Tor Inaba N16961).